Reading from the N-terminus, the 217-residue chain is Probable GTP-binding protein EngB (217 aa).

The EngB-type G domain maps to 29 to 213 (GPSEVAFAGR…RQAIAQTVGI (185 aa)). GTP is bound by residues 37–44 (GRSNVGKS), 64–68 (GRTQE), 91–94 (DMPG), 158–161 (TKTD), and 192–194 (TSS). Mg(2+) contacts are provided by Ser44 and Thr66.

This sequence belongs to the TRAFAC class TrmE-Era-EngA-EngB-Septin-like GTPase superfamily. EngB GTPase family. Mg(2+) is required as a cofactor.

In terms of biological role, necessary for normal cell division and for the maintenance of normal septation. The sequence is that of Probable GTP-binding protein EngB from Rhizobium etli (strain CIAT 652).